The primary structure comprises 184 residues: Ras-related protein Rap-1b (184 aa).

10 to 17 (GSGGVGKS) contacts GTP. Residues 32 to 40 (YDPTIEDSY) carry the Effector region motif. GTP-binding positions include 57-61 (DTAGT) and 116-119 (NKCD). At C181 the chain carries Cysteine methyl ester. A lipid anchor (S-geranylgeranyl cysteine) is attached at C181. Residues 182–184 (HLL) constitute a propeptide, removed in mature form.

This sequence belongs to the small GTPase superfamily. Ras family.

It localises to the cell membrane. The protein localises to the cytoplasm. Its subcellular location is the cytosol. It is found in the cell junction. The catalysed reaction is GTP + H2O = GDP + phosphate + H(+). Probable GTP-binding protein that possesses GTPase activity. May play a role in endothelial cell polarity and endothelial barrier function. This is Ras-related protein Rap-1b (rap1b) from Xenopus laevis (African clawed frog).